Here is a 262-residue protein sequence, read N- to C-terminus: Dehydrin COR410 (262 aa).

2 disordered regions span residues 1–153 (MEDE…HDTD) and 187–262 (LPGG…KPSA). Composition is skewed to basic and acidic residues over residues 34–45 (KKAEEDKEKEEE) and 53–74 (VSVE…KETL). Acidic residues predominate over residues 89–101 (SDEEEEEVIDDNG). 2 tandem repeats follow at residues 106–126 (RKKK…HKDT) and 173–193 (EEEK…GHKK). Residues 106-245 (RKKKKGLKEK…MDKLPGYHKT (140 aa)) form a 3 X 21 AA repeats, Lys-rich region. Composition is skewed to basic and acidic residues over residues 113 to 130 (KEKL…EGEH) and 187 to 196 (LPGGHKKPED). Over residues 197–209 (AAAVPVTHAAPAP) the composition is skewed to low complexity. Repeat 3 spans residues 225 to 245 (AKEKKGLLGKIMDKLPGYHKT). Residues 244–262 (KTGEEDKAAAATGEHKPSA) are compositionally biased toward basic and acidic residues.

In terms of tissue distribution, expressed in roots, crown and leaves during cold acclimation.

The chain is Dehydrin COR410 (COR410) from Triticum aestivum (Wheat).